The sequence spans 356 residues: Guanine nucleotide-binding protein alpha-15 subunit (356 aa).

G2 is lipidated: N-myristoyl glycine. Residue C5 is the site of S-palmitoyl cysteine attachment. Residues 33–356 (GNQKLLLLGT…GRNLRGTGME (324 aa)) enclose the G-alpha domain. The G1 motif stretch occupies residues 36-49 (KLLLLGTGECGKST). GTP is bound by residues 41 to 48 (GTGECGKS), 177 to 183 (LRIRIPT), 202 to 206 (DVGGQ), 271 to 274 (NKRD), and A328. 2 residues coordinate Mg(2+): S48 and T183. A G2 motif region spans residues 175-183 (DMLRIRIPT). The segment at 198–207 (FRIFDVGGQR) is G3 motif. The segment at 267–274 (ILFLNKRD) is G4 motif. Residues 326-331 (TCATDT) form a G5 motif region.

This sequence belongs to the G-alpha family. In terms of assembly, g proteins are composed of 3 units; alpha, beta and gamma. The alpha chain contains the guanine nucleotide binding site.

In terms of biological role, guanine nucleotide-binding proteins (G proteins) are involved as modulators or transducers in various transmembrane signaling systems. In Caenorhabditis briggsae, this protein is Guanine nucleotide-binding protein alpha-15 subunit (gpa-15).